The sequence spans 151 residues: UPF0208 membrane protein YfbV (151 aa).

The next 2 helical transmembrane spans lie at 46-65 and 69-91; these read YAIRFMPPIAVFTLCWQIAL and LGPAVATALFALSLPMQGLWWLG.

The protein belongs to the UPF0208 family.

Its subcellular location is the cell inner membrane. The protein is UPF0208 membrane protein YfbV of Escherichia coli O1:K1 / APEC.